The following is a 384-amino-acid chain: DNA repair protein RAD51 homolog 2 (384 aa).

Residues 1–75 are interaction with RAD51C; sequence MGSKKLKRVG…TAYGIKAQRS (75 aa). 108–115 is an ATP binding site; it reads GPPGCGKT.

The protein belongs to the RecA family. RAD51 subfamily. As to quaternary structure, part of the BCDX2 complex consisting of RAD51B, RAD51C, RAD51D and XRCC2; the complex has a ring-like structure arranged into a flat disc around a central channel. The BCDX2 subcomplex RAD51B:RAD51C interacts with RAD51. Interacts with SWSAP1; involved in homologous recombination repair. Interacts with HELQ. Phosphorylated on tyrosine residues by BCR-ABL. In terms of tissue distribution, expressed in a wide range of tissues.

Its subcellular location is the nucleus. Its function is as follows. Involved in the homologous recombination repair (HRR) pathway of double-stranded DNA breaks arising during DNA replication or induced by DNA-damaging agents. May promote the assembly of presynaptic RAD51 nucleoprotein filaments. Binds single-stranded DNA and double-stranded DNA and has DNA-dependent ATPase activity. Part of the RAD51 paralog protein complex BCDX2 which acts in the BRCA1-BRCA2-dependent HR pathway. Upon DNA damage, BCDX2 acts downstream of BRCA2 recruitment and upstream of RAD51 recruitment. BCDX2 binds predominantly to the intersection of the four duplex arms of the Holliday junction and to junction of replication forks. The BCDX2 complex was originally reported to bind single-stranded DNA, single-stranded gaps in duplex DNA and specifically to nicks in duplex DNA. The BCDX2 subcomplex RAD51B:RAD51C exhibits single-stranded DNA-dependent ATPase activity suggesting an involvement in early stages of the HR pathway. This Homo sapiens (Human) protein is DNA repair protein RAD51 homolog 2 (RAD51B).